Consider the following 448-residue polypeptide: Homogentisate 1,2-dioxygenase (448 aa).

The Proton acceptor role is filled by H303. Residues H346 and E352 each coordinate Fe cation. Homogentisate contacts are provided by Y361 and H382. A Fe cation-binding site is contributed by H382.

The protein belongs to the homogentisate dioxygenase family. Hexamer; dimer of trimers. The cofactor is Fe cation.

The catalysed reaction is homogentisate + O2 = 4-maleylacetoacetate + H(+). The protein operates within amino-acid degradation; L-phenylalanine degradation; acetoacetate and fumarate from L-phenylalanine: step 4/6. Functionally, involved in the catabolism of homogentisate (2,5-dihydroxyphenylacetate or 2,5-OH-PhAc), a central intermediate in the degradation of phenylalanine and tyrosine. Catalyzes the oxidative ring cleavage of the aromatic ring of homogentisate to yield maleylacetoacetate. The polypeptide is Homogentisate 1,2-dioxygenase (Bradyrhizobium diazoefficiens (strain JCM 10833 / BCRC 13528 / IAM 13628 / NBRC 14792 / USDA 110)).